Here is a 287-residue protein sequence, read N- to C-terminus: Stomatin-like protein 3 (287 aa).

S3 carries the phosphoserine modification. A helical; Signal-anchor for type III membrane protein transmembrane segment spans residues 25-45; the sequence is WILFFLSFLLMLVTFPISVWM. The Cytoplasmic portion of the chain corresponds to 46–287; sequence CLKIIKEYER…GNNKKVTAKA (242 aa). S237 is modified (phosphoserine).

The protein belongs to the band 7/mec-2 family. Homodimer. Interacts with PIEZO1 and PIEZO2. Expressed by all dorsal root ganglion neurons and is selectively expressed in neuronal tissues. Detected in olfactory epithelium.

Its subcellular location is the cell membrane. Its function is as follows. Required for the function of many mechanoreceptors. Modulate mechanotransduction channels and acid-sensing ion channels (ASIC) proteins. Potentiates PIEZO1 and PIEZO2 function by increasing their sensitivity to mechanical stimulations. In Mus musculus (Mouse), this protein is Stomatin-like protein 3 (Stoml3).